Consider the following 417-residue polypeptide: Phosphoglycerate kinase, cytosolic (417 aa).

Residues V23, D24, F25, N26, R39, S61, H62, G64, R65, R132, H168, and R169 each coordinate (2R)-3-phosphoglycerate. G214 and A215 together coordinate ADP. G214 contributes to the CDP binding site. AMP contacts are provided by A215 and K216. A215 is a binding site for ATP. A215 is a binding site for Mg(2+). Residue K216 coordinates (2R)-3-phosphoglycerate. D219 contributes to the CDP binding site. A Mg(2+)-binding site is contributed by D219. K220 and G238 together coordinate ADP. K220 contributes to the AMP binding site. K220 provides a ligand contact to ATP. G238 contributes to the CDP binding site. Residues A239 and A311 each coordinate AMP. A239 and A311 together coordinate ATP. ADP contacts are provided by A311 and N335. Residues G336 and F341 each coordinate CDP. Residues F341, E342, D374, and T375 each contribute to the ADP site. Residue E342 participates in AMP binding. 3 residues coordinate ATP: E342, D374, and T375. Mg(2+) is bound at residue D374.

This sequence belongs to the phosphoglycerate kinase family. Monomer. It depends on Mg(2+) as a cofactor.

Its subcellular location is the cytoplasm. The enzyme catalyses (2R)-3-phosphoglycerate + ATP = (2R)-3-phospho-glyceroyl phosphate + ADP. It participates in carbohydrate degradation; glycolysis; pyruvate from D-glyceraldehyde 3-phosphate: step 2/5. In Crithidia fasciculata, this protein is Phosphoglycerate kinase, cytosolic (PGKB).